The sequence spans 197 residues: uncharacterized protein (197 aa).

The PfpI endopeptidase domain occupies 29 to 166; the sequence is DWSVHTVSLD…FTNLILEMID (138 aa). The active-site Nucleophile is cysteine 98.

It belongs to the peptidase C56 family.

This is an uncharacterized protein from Bacillus subtilis (strain 168).